The following is a 449-amino-acid chain: MLSSQTSSIFTVSRLNQTVRLLLEQEMGQVWISGEISNFTQPASGHWYFTLKDDTAQVRCAMFRNSNRRVTFRPQHGQQVLVRANITLYEPRGDYQVIAESMQPAGEGLLQQKYEQLKAKLQAEGLFDQQHKQPLPSPAHCVGVITSKTGAALHDILHVLKRRDPSLPVIIYPTAVQGDDAPGQIVRAIELANARGECDVLIVGRGGGSLEDLWSFNDERVARAIFASRIPVVSAVGHETDVTIADFVADLRAPTPSAAAEIVSRNQQELLRQIQSAQQRLGMAMDYYLANRSRRFTQIFHRLQQQHPQLRLARQQTALERLRQRMGFALEARIKQATQRQQRVSQRLSQQNPQPRIHRAQSRIQQLEYRLTENIRSRLSEQRERFGNAVTHLEAVSPLATLARGYTVSTTTDGKVLKKIKQVNAGDIMTTRLEDGWLESEVKSVTPGT.

The protein belongs to the XseA family. In terms of assembly, heterooligomer composed of large and small subunits.

It is found in the cytoplasm. The catalysed reaction is Exonucleolytic cleavage in either 5'- to 3'- or 3'- to 5'-direction to yield nucleoside 5'-phosphates.. Bidirectionally degrades single-stranded DNA into large acid-insoluble oligonucleotides, which are then degraded further into small acid-soluble oligonucleotides. This Salmonella newport (strain SL254) protein is Exodeoxyribonuclease 7 large subunit.